A 574-amino-acid chain; its full sequence is Proline--tRNA ligase (574 aa).

Belongs to the class-II aminoacyl-tRNA synthetase family. ProS type 1 subfamily. In terms of assembly, homodimer.

It localises to the cytoplasm. It carries out the reaction tRNA(Pro) + L-proline + ATP = L-prolyl-tRNA(Pro) + AMP + diphosphate. Functionally, catalyzes the attachment of proline to tRNA(Pro) in a two-step reaction: proline is first activated by ATP to form Pro-AMP and then transferred to the acceptor end of tRNA(Pro). As ProRS can inadvertently accommodate and process non-cognate amino acids such as alanine and cysteine, to avoid such errors it has two additional distinct editing activities against alanine. One activity is designated as 'pretransfer' editing and involves the tRNA(Pro)-independent hydrolysis of activated Ala-AMP. The other activity is designated 'posttransfer' editing and involves deacylation of mischarged Ala-tRNA(Pro). The misacylated Cys-tRNA(Pro) is not edited by ProRS. This Nitratidesulfovibrio vulgaris (strain DP4) (Desulfovibrio vulgaris) protein is Proline--tRNA ligase.